The following is a 76-amino-acid chain: Tabkunin 2 (76 aa).

The first 20 residues, 1 to 20, serve as a signal peptide directing secretion; sequence MKVLSLIFVIFSVLVLFASA. The BPTI/Kunitz inhibitor domain maps to 25–75; it reads CDQPKAVGRCFAAFPKFYYNSSSGQCQAFIYGGCGGNENNFNTLEECNAKC. 3 cysteine pairs are disulfide-bonded: Cys-25–Cys-75, Cys-34–Cys-58, and Cys-50–Cys-71.

In terms of tissue distribution, expressed in salivary glands.

Its subcellular location is the secreted. In terms of biological role, potent anticoagulant protein that inhibits the hydrolytic activities of all serine proteases tested (trypsin, thrombin, elastase, and chymotrypsin), with the highest efficacy on thrombin. The sequence is that of Tabkunin 2 from Tabanus yao (Horsefly).